Here is a 70-residue protein sequence, read N- to C-terminus: Conotoxin AbVIB (70 aa).

A signal peptide spans 1–17; that stretch reads VIIIAVLFLTACQLTTA. Positions 18–41 are excised as a propeptide; the sequence is ETSSRGKQKHRALRSTDKNSKLTR. Residues 20 to 41 are disordered; the sequence is SSRGKQKHRALRSTDKNSKLTR. 3 disulfide bridges follow: Cys43-Cys57, Cys50-Cys61, and Cys56-Cys68.

It belongs to the conotoxin O1 superfamily. In terms of tissue distribution, expressed by the venom duct.

It localises to the secreted. This is Conotoxin AbVIB from Conus abbreviatus (Abbreviated cone).